A 356-amino-acid chain; its full sequence is MQFTALLAALGAPLALAASIPAAAHNHSMIDVQLAATGNSMIKATITNTGDRTLNLLKFNTIMDEHPTRKVMVYQDGAEVQFTGMLPRYKMSDLTPEYFVNLGPKASVEHSFDLAATHDLSRGGKIVVKAHGMVPTAEENATTITGHTLYESNELTMDVDGKQAAAVEQAMGGDDSTGVIDKRSNIVTSSCRGSQLRVLQTALSNASRLSRAAASAAQRNPSKMREYFKTADSRTVQKVASRFLSVARESSSGSTGRTTYYCNDNRGGCHPGVLAYTLPSKNQVFNCPSYYQLPALNNRCHGQDQATTTLHELTHNPAVVTPFCEDLGYGYQRVSALPASKAIQNADTYSLFANGM.

The signal sequence occupies residues 1 to 17 (MQFTALLAALGAPLALA). Positions 18 to 183 (ASIPAAAHNH…DDSTGVIDKR (166 aa)) are excised as a propeptide. Intrachain disulfides connect Cys-191–Cys-262 and Cys-269–Cys-287. Residue Asn-205 is glycosylated (N-linked (GlcNAc...) asparagine). Zn(2+) is bound at residue His-311. Residue Glu-312 is part of the active site. Zn(2+) contacts are provided by His-315 and Asp-326.

Belongs to the peptidase M35 family. Zn(2+) serves as cofactor.

The protein localises to the secreted. The catalysed reaction is Preferential cleavage of bonds with hydrophobic residues in P1'. Also 3-Asn-|-Gln-4 and 8-Gly-|-Ser-9 bonds in insulin B chain.. Functionally, probable secreted metalloprotease that shows high activities on basic nuclear substrates such as histone and protamine. May be involved in virulence. The protein is Probable neutral protease 2 homolog ARB_04769 of Arthroderma benhamiae (strain ATCC MYA-4681 / CBS 112371) (Trichophyton mentagrophytes).